We begin with the raw amino-acid sequence, 1004 residues long: NACHT, LRR and PYD domains-containing protein 9C (1004 aa).

The Pyrin domain maps to 1–92 (MVDSSSYGLL…TMAQIERRDK (92 aa)). In terms of domain architecture, NACHT spans 143–465 (ATAVVLGTRG…KQDKDTYHPV (323 aa)). 149–156 (GTRGKGKT) provides a ligand contact to ATP. LRR repeat units lie at residues 750-770 (KVKHLSLVENPLKNKGVMFLC), 779-800 (VLESLMLSYCCLTFIACGHLYE), 807-828 (HLSLLDLGSNFLEDIGVNLLCE), 836-857 (TLKELWLPGCYLTSECCEEISA), and 864-884 (NLKTLKLGNNNIQDTGVKRLC).

It belongs to the NLRP family. As to expression, oocyte specific.

It localises to the cytoplasm. In terms of biological role, may be involved in inflammation. The chain is NACHT, LRR and PYD domains-containing protein 9C (Nlrp9c) from Mus musculus (Mouse).